A 950-amino-acid polypeptide reads, in one-letter code: F-box only protein 10 (950 aa).

The F-box domain maps to 1-48 (METGGLPLELWRMILAYLHLPDLGRCSLVCRAWYELILSLDSTRWRQL). PbH1 repeat units follow at residues 198–217 (SGHI…QVHG) and 238–260 (VPLC…TVEG). Positions 313 to 364 (IEGSQSPTSPVCSSPKPGSKEAEVGSDGERVAQTPDSSDGGLSPSGEDEDDE) are disordered. Residues 315–324 (GSQSPTSPVC) show a composition bias toward polar residues. 2 positions are modified to phosphoserine: S321 and S326. The span at 330–342 (GSKEAEVGSDGER) shows a compositional bias: basic and acidic residues. Low complexity predominate over residues 347 to 357 (PDSSDGGLSPS). PbH1 repeat units follow at residues 423 to 444 (VQGC…FVCS), 467 to 489 (NSKI…FLRL), 490 to 512 (EGGG…DIRK), 513 to 535 (KSNP…VVLG), 536 to 558 (NGKG…YILY), 559 to 581 (HGNP…AVNE), 582 to 604 (NGKG…DIRR), 605 to 627 (GGVP…VVGD), 628 to 650 (EGKG…WMMS), 651 to 673 (SSLP…AVFS), 713 to 735 (ITVA…FVQS), 736 to 758 (SEAL…TIVQ), 760 to 782 (SQLT…KVEF), 783 to 805 (QCKV…ITKG), and 828 to 850 (RSDT…AVRG).

As to quaternary structure, component of the SCF(FBXO10) complex consisting of CUL1, SKP1 and FBXO10. Interacts with BCL2. Interacts with PRDM1. Particularly highly expressed in B-cells.

Its subcellular location is the cytoplasm. Its pathway is protein modification; protein ubiquitination. Substrate-recognition component of the SCF (SKP1-CUL1-F-box protein)-type E3 ubiquitin ligase complex. Mediates the ubiquitination and degradation of BCL2, an antiapoptotic protein, thereby playing a role in apoptosis by controlling the stability of BCL2. Targets also the receptor for advanced glycation end products RAGE for ubiquitination and subsequent lysosomal degradation. Directly controls HGAL/GCSAM ubiquitination and degradation and thereby decreases BCR signaling. The sequence is that of F-box only protein 10 (Fbxo10) from Mus musculus (Mouse).